A 102-amino-acid polypeptide reads, in one-letter code: MEEQKIRIRLKSYSHEIIDVSAKKIVDTVTRAGATIVGPVPLPTKKSVVCVIRSPHRHKDSREHFEMRTHKRLINVVDLTPRAVDALMRLDLSSEVNVEIKL.

It belongs to the universal ribosomal protein uS10 family. Part of the 30S ribosomal subunit.

Involved in the binding of tRNA to the ribosomes. This Tropheryma whipplei (strain TW08/27) (Whipple's bacillus) protein is Small ribosomal subunit protein uS10.